A 672-amino-acid chain; its full sequence is Threonine--tRNA ligase (672 aa).

In terms of domain architecture, TGS spans methionine 1–threonine 64. The interval aspartate 257–proline 566 is catalytic. Positions 362, 413, and 543 each coordinate Zn(2+).

It belongs to the class-II aminoacyl-tRNA synthetase family. Homodimer. Requires Zn(2+) as cofactor.

It localises to the cytoplasm. It catalyses the reaction tRNA(Thr) + L-threonine + ATP = L-threonyl-tRNA(Thr) + AMP + diphosphate + H(+). Its function is as follows. Catalyzes the attachment of threonine to tRNA(Thr) in a two-step reaction: L-threonine is first activated by ATP to form Thr-AMP and then transferred to the acceptor end of tRNA(Thr). Also edits incorrectly charged L-seryl-tRNA(Thr). This Erythrobacter litoralis (strain HTCC2594) protein is Threonine--tRNA ligase.